Consider the following 35-residue polypeptide: Cytochrome b6-f complex subunit 5 (35 aa).

The chain crosses the membrane as a helical span at residues 5 to 25 (LLCGIVLGLIPVTLTGLFVAA).

The protein belongs to the PetG family. As to quaternary structure, the 4 large subunits of the cytochrome b6-f complex are cytochrome b6, subunit IV (17 kDa polypeptide, PetD), cytochrome f and the Rieske protein, while the 4 small subunits are PetG, PetL, PetM and PetN. The complex functions as a dimer.

The protein resides in the plastid. The protein localises to the organellar chromatophore thylakoid membrane. Functionally, component of the cytochrome b6-f complex, which mediates electron transfer between photosystem II (PSII) and photosystem I (PSI), cyclic electron flow around PSI, and state transitions. PetG is required for either the stability or assembly of the cytochrome b6-f complex. The chain is Cytochrome b6-f complex subunit 5 from Paulinella chromatophora.